The primary structure comprises 119 residues: Large ribosomal subunit protein uL18 (119 aa).

This sequence belongs to the universal ribosomal protein uL18 family. In terms of assembly, part of the 50S ribosomal subunit; part of the 5S rRNA/L5/L18/L25 subcomplex. Contacts the 5S and 23S rRNAs.

In terms of biological role, this is one of the proteins that bind and probably mediate the attachment of the 5S RNA into the large ribosomal subunit, where it forms part of the central protuberance. The sequence is that of Large ribosomal subunit protein uL18 from Anaeromyxobacter dehalogenans (strain 2CP-C).